We begin with the raw amino-acid sequence, 246 residues long: tRNA (guanine-N(7)-)-methyltransferase (246 aa).

S-adenosyl-L-methionine is bound by residues Glu-77, Glu-102, Asp-129, and Asp-152. Asp-152 is an active-site residue. Residues Lys-156, Asp-188, and 225-228 each bind substrate; that span reads TKFE.

This sequence belongs to the class I-like SAM-binding methyltransferase superfamily. TrmB family.

It carries out the reaction guanosine(46) in tRNA + S-adenosyl-L-methionine = N(7)-methylguanosine(46) in tRNA + S-adenosyl-L-homocysteine. The protein operates within tRNA modification; N(7)-methylguanine-tRNA biosynthesis. Its function is as follows. Catalyzes the formation of N(7)-methylguanine at position 46 (m7G46) in tRNA. The chain is tRNA (guanine-N(7)-)-methyltransferase from Haemophilus influenzae (strain 86-028NP).